The following is a 347-amino-acid chain: Holliday junction branch migration complex subunit RuvB (347 aa).

Residues Met1–Tyr183 are large ATPase domain (RuvB-L). ATP contacts are provided by residues Leu22, Arg23, Gly64, Lys67, Thr68, Thr69, Glu130–Phe132, Arg173, Tyr183, and Arg220. Position 68 (Thr68) interacts with Mg(2+). A small ATPAse domain (RuvB-S) region spans residues Ser184–Gly254. The head domain (RuvB-H) stretch occupies residues Ala257–Phe347. The DNA site is built by Arg312 and Arg317.

This sequence belongs to the RuvB family. In terms of assembly, homohexamer. Forms an RuvA(8)-RuvB(12)-Holliday junction (HJ) complex. HJ DNA is sandwiched between 2 RuvA tetramers; dsDNA enters through RuvA and exits via RuvB. An RuvB hexamer assembles on each DNA strand where it exits the tetramer. Each RuvB hexamer is contacted by two RuvA subunits (via domain III) on 2 adjacent RuvB subunits; this complex drives branch migration. In the full resolvosome a probable DNA-RuvA(4)-RuvB(12)-RuvC(2) complex forms which resolves the HJ.

It localises to the cytoplasm. It catalyses the reaction ATP + H2O = ADP + phosphate + H(+). Its function is as follows. The RuvA-RuvB-RuvC complex processes Holliday junction (HJ) DNA during genetic recombination and DNA repair, while the RuvA-RuvB complex plays an important role in the rescue of blocked DNA replication forks via replication fork reversal (RFR). RuvA specifically binds to HJ cruciform DNA, conferring on it an open structure. The RuvB hexamer acts as an ATP-dependent pump, pulling dsDNA into and through the RuvAB complex. RuvB forms 2 homohexamers on either side of HJ DNA bound by 1 or 2 RuvA tetramers; 4 subunits per hexamer contact DNA at a time. Coordinated motions by a converter formed by DNA-disengaged RuvB subunits stimulates ATP hydrolysis and nucleotide exchange. Immobilization of the converter enables RuvB to convert the ATP-contained energy into a lever motion, pulling 2 nucleotides of DNA out of the RuvA tetramer per ATP hydrolyzed, thus driving DNA branch migration. The RuvB motors rotate together with the DNA substrate, which together with the progressing nucleotide cycle form the mechanistic basis for DNA recombination by continuous HJ branch migration. Branch migration allows RuvC to scan DNA until it finds its consensus sequence, where it cleaves and resolves cruciform DNA. The chain is Holliday junction branch migration complex subunit RuvB from Symbiobacterium thermophilum (strain DSM 24528 / JCM 14929 / IAM 14863 / T).